We begin with the raw amino-acid sequence, 381 residues long: Alkanesulfonate monooxygenase (381 aa).

The protein belongs to the SsuD family. As to quaternary structure, homotetramer.

It carries out the reaction an alkanesulfonate + FMNH2 + O2 = an aldehyde + FMN + sulfite + H2O + 2 H(+). Catalyzes the desulfonation of aliphatic sulfonates. The protein is Alkanesulfonate monooxygenase of Escherichia coli O8 (strain IAI1).